Reading from the N-terminus, the 76-residue chain is Beta-defensin 121 (76 aa).

An N-terminal signal peptide occupies residues 1-15; sequence MKLLLLLLTVTLLLA. Disulfide bonds link cysteine 23/cysteine 50, cysteine 30/cysteine 44, and cysteine 34/cysteine 51.

The protein belongs to the beta-defensin family. In terms of tissue distribution, abundant expression in the male reproductive tract only.

Its subcellular location is the secreted. Functionally, has antibacterial activity. The sequence is that of Beta-defensin 121 (DEFB121) from Homo sapiens (Human).